We begin with the raw amino-acid sequence, 795 residues long: Forkhead box protein P4 (795 aa).

Residues 1–25 (MMVESASETIRSAPSGQNGVGSLSA) are compositionally biased toward polar residues. The tract at residues 1–62 (MMVESASETI…SGGADSNGEM (62 aa)) is disordered. The span at 36-45 (AGTAPAAGRD) shows a compositional bias: low complexity. Residues Ser-58 and Ser-92 each carry the phosphoserine modification. Lys-181 is covalently cross-linked (Glycyl lysine isopeptide (Lys-Gly) (interchain with G-Cter in SUMO2)). 2 disordered regions span residues 233 to 252 (PQLWKGEGAPGQPAEDSGRQ) and 265 to 310 (TSFA…PLYG). Over residues 292–303 (SRRDSSSHEETP) the composition is skewed to basic and acidic residues. The segment at 312 to 337 (GECKWPGCETLCEDLGQFIKHLNTEH) adopts a C2H2-type zinc-finger fold. Positions 354–375 (VQQLEIQLAKESERLQAMMAHL) are leucine-zipper. The interval 379–437 (PSEPKPFSQPVTVSADPFPDGLVHPPTSAAAPVTPLRPPGLGSASLHSGGPARRRSNDK) is disordered. Residue Lys-383 forms a Glycyl lysine isopeptide (Lys-Gly) (interchain with G-Cter in SUMO2) linkage. Residues 459–549 (RPPFTYASLI…PPKMTGSPTL (91 aa)) constitute a DNA-binding region (fork-head). Residue Ser-546 is modified to Phosphoserine. Positions 589–671 (ASSLLPLSQE…LEEDLGGEDM (83 aa)) are disordered. Residues 609–627 (SNGSSSPPRLSPPQYSHQI) show a composition bias toward polar residues. A compositionally biased stretch (basic and acidic residues) spans 628–642 (QVKEEPAEAEEDRRP).

As to quaternary structure, forms homodimers and heterodimers with FOXP1 and FOXP2. Dimerization is required for DNA-binding. Expressed in the adult heart, brain, spleen lung, liver, kidney and testes.

The protein localises to the nucleus. Transcriptional repressor that represses lung-specific expression. The chain is Forkhead box protein P4 from Mus musculus (Mouse).